The sequence spans 1183 residues: MEEARAATNGGSGESQKLSNGEKSSQLEPGDVGNELLADIELEEDDYLDVVPPSPEEELPSFSPSVRNVSNIFKESPTDGRSAVHGTESEPELMAPKQPAAEQDSSAEHADKGLHLEQQLYSVMEDICKLVDAIPLHELTSISCAKELLQQRELRRKLLADSGALNTNSVNGPRNWKACVQQDPSSRPGTPLCSGPGRGVSSVGSTPKSTNLPSVLSRTVNSSSFSTIRNQTLDKLDTSYSSKETDQEVICLEPAALPSPKVNGKGSTSLSRPSEASFNGSWCEKPTGRDSGNWRVPERPTASTALKAQHTAPAGNPASGCWDVNDTDFDLDHFDIDDFDEGWEEAVAPEAAPEAPPAPQWQPLREGSASLRCRLLAAAAGSAPGPHPTAPKSGCGISAKSSSEPLVHNPAHERFRGMKFSHSEEMLKIFHRKFGLHSFRTNQLEAINAALLGEDCFILMPTGGGKSLCYQLPACVSAGVTVVISPLRSLIIDQVQKLKTLDIASTYLTGDITDADASKTYMQLSKKDPIIKLLYVTPEKVCASNRLLSALENLYNRKLLARFVIDEAHCVSQWGHDFRKDYKRLNMLRKKFHSVPMMALTATANPRVQKDIQNQLEMLKPQVFTMSFNRHNLKYDVLPKKPKKVAMDCLEWIKKYHPHDSGIIYCLSRHECDTTAAILQKEGLAALAYHAGLTDSNRDLVQKKWVNQEGCQVICATIAFGMGIDKPDVRYVIHASLPKSIEGYYQESGRAGRDGEMSHCLLFYSYSDVTRLRRLILMEKDGNSHTRQTHFNNLYSMVHYCENVVDCRRIQLLAYFGETDFNPNFCKDHPEVICDNCSRKKDYKSRNVTDEVKSIIRFVQQHCGQVGGINGNRNTGSGRYTLNMMVDIFLGAKSAKIQSGIFGKGAAYSRHNVERLFRKLVLDKILDEDLYITANDQAVAYVVLGEKAQAVLNGLLQVEFHETENASAIRKQRASVTKMSQREEMVKKCLGELTDTCKTLGKIFDVHYFNIFSTSTLKKIAETLSSDAEVLLQIDGVTEDKLEKYGAEIIKVMDKYSEWTTPEDAACQSVDTAPGSAGTPGSEEEAADDVVTSSYFGGNANQRRKRKRLPNSGESKRKKTSSGGSQQFYSKGARYRRARRAPGSRAAAPAQSSALRGAGARLGIMAPPKPSSRHFLQPSYAVL.

The interval 1 to 109 (MEEARAATNG…AAEQDSSAEH (109 aa)) is disordered. The span at 14-27 (ESQKLSNGEKSSQL) shows a compositional bias: polar residues. Acidic residues predominate over residues 38–48 (ADIELEEDDYL). Residues 110 to 162 (ADKGLHLEQQLYSVMEDICKLVDAIPLHELTSISCAKELLQQRELRRKLLADS) are necessary for dimerization and homooligomerization. Disordered stretches follow at residues 164–215 (ALNT…LPSV), 260–323 (PKVN…GCWD), and 381–408 (GSAP…PLVH). 2 stretches are compositionally biased toward polar residues: residues 206–215 (TPKSTNLPSV) and 265–280 (KGST…SFNG). Residues 439–443 (FRTNQ) and 463–467 (GGGKS) each bind ATP. A Helicase ATP-binding domain is found at 447–622 (INAALLGEDC…QNQLEMLKPQ (176 aa)). The DEAH box motif lies at 566 to 569 (DEAH). 3' overhang DNA-binding regions lie at residues 641 to 644 (KPKK) and 668 to 670 (SRH). The Helicase C-terminal domain occupies 648–795 (DCLEWIKKYH…TRQTHFNNLY (148 aa)). Position 753 (Arg-753) interacts with ATP. The segment at 771–774 (RLRR) is 3' overhang DNA-binding. Zn(2+) is bound by residues Cys-807, Cys-826, Cys-834, and Cys-837. The DNA Holliday junction binding stretch occupies residues 865 to 910 (QVGGINGNRNTGSGRYTLNMMVDIFLGAKSAKIQSGIFGKGAAYSR). 3 3' overhang DNA-binding regions span residues 881–883 (TLN), 892–896 (AKSAK), and 931–937 (YITANDQ). Residues 983-1063 (EEMVKKCLGE…DKYSEWTTPE (81 aa)) enclose the HRDC domain. Residues 998-1015 (KTLGKIFDVHYFNIFSTS) are necessary for ssDNA and DNA Holliday junction binding. The segment at 1068–1183 (QSVDTAPGSA…HFLQPSYAVL (116 aa)) is disordered. Polar residues predominate over residues 1091-1101 (VTSSYFGGNAN). Positions 1104 to 1120 (RKRKRLPNSGESKRKKT) match the Nuclear localization signal motif. Over residues 1133-1142 (ARYRRARRAP) the composition is skewed to basic residues. Low complexity predominate over residues 1143 to 1158 (GSRAAAPAQSSALRGA).

It belongs to the helicase family. RecQ subfamily. As to quaternary structure, monomer. Homodimer (via N-terminus). Homotetramer (via N-terminus); dimer of dimers. Homohexamer (via N-terminus). Self-association negatively regulates DNA unwinding amplitude and rate. Oligomer complexes dissociate into monomer in presence of ATP. It depends on Zn(2+) as a cofactor.

The protein resides in the nucleus. It carries out the reaction Couples ATP hydrolysis with the unwinding of duplex DNA by translocating in the 3'-5' direction.. The catalysed reaction is ATP + H2O = ADP + phosphate + H(+). Its function is as follows. ATP-dependent DNA helicase that unwinds single- and double-stranded DNA in a 3'-5' direction. Participates in DNA replication and repair. Involved in 5'-end resection of DNA during double-strand break (DSB) repair. Negatively regulates sister chromatid exchange (SCE). Stimulates DNA 4-way junction branch migration and DNA Holliday junction dissolution. Binds DNA. Binds single-stranded DNA (ssDNA), forked duplex DNA and DNA Holliday junction. The chain is RecQ-like DNA helicase BLM (BLM) from Gallus gallus (Chicken).